Here is a 121-residue protein sequence, read N- to C-terminus: Small ribosomal subunit protein uS13 (121 aa).

The segment at 97 to 121 (VRGQRTRTNARTRRGARKTVAGKKK) is disordered. Residues 100–121 (QRTRTNARTRRGARKTVAGKKK) are compositionally biased toward basic residues.

It belongs to the universal ribosomal protein uS13 family. Part of the 30S ribosomal subunit. Forms a loose heterodimer with protein S19. Forms two bridges to the 50S subunit in the 70S ribosome.

Located at the top of the head of the 30S subunit, it contacts several helices of the 16S rRNA. In the 70S ribosome it contacts the 23S rRNA (bridge B1a) and protein L5 of the 50S subunit (bridge B1b), connecting the 2 subunits; these bridges are implicated in subunit movement. Contacts the tRNAs in the A and P-sites. The protein is Small ribosomal subunit protein uS13 of Parasynechococcus marenigrum (strain WH8102).